Consider the following 394-residue polypeptide: Elongation factor Tu (394 aa).

The 195-residue stretch at 10 to 204 (KPHVNVGTIG…AMDDYIPAPE (195 aa)) folds into the tr-type G domain. Residues 19-26 (GHVDHGKT) form a G1 region. 19–26 (GHVDHGKT) contributes to the GTP binding site. Thr-26 lines the Mg(2+) pocket. The interval 60–64 (GITIN) is G2. Residues 81–84 (DCPG) form a G3 region. GTP is bound by residues 81–85 (DCPGH) and 136–139 (NKCD). The tract at residues 136–139 (NKCD) is G4. The interval 174–176 (SAL) is G5.

This sequence belongs to the TRAFAC class translation factor GTPase superfamily. Classic translation factor GTPase family. EF-Tu/EF-1A subfamily. In terms of assembly, monomer.

The protein localises to the cytoplasm. The catalysed reaction is GTP + H2O = GDP + phosphate + H(+). Its function is as follows. GTP hydrolase that promotes the GTP-dependent binding of aminoacyl-tRNA to the A-site of ribosomes during protein biosynthesis. The protein is Elongation factor Tu of Francisella tularensis subsp. tularensis (strain FSC 198).